The sequence spans 638 residues: Threonine--tRNA ligase (638 aa).

The TGS domain maps to 1 to 63 (MVMIQIELPD…TESGRLEIIT (63 aa)). A catalytic region spans residues 245–536 (DHRRIGRELD…LIEHYAGNFP (292 aa)). The Zn(2+) site is built by Cys-337, His-388, and His-513.

Belongs to the class-II aminoacyl-tRNA synthetase family. In terms of assembly, homodimer. The cofactor is Zn(2+).

The protein resides in the cytoplasm. The catalysed reaction is tRNA(Thr) + L-threonine + ATP = L-threonyl-tRNA(Thr) + AMP + diphosphate + H(+). Catalyzes the attachment of threonine to tRNA(Thr) in a two-step reaction: L-threonine is first activated by ATP to form Thr-AMP and then transferred to the acceptor end of tRNA(Thr). Also edits incorrectly charged L-seryl-tRNA(Thr). The chain is Threonine--tRNA ligase from Syntrophotalea carbinolica (strain DSM 2380 / NBRC 103641 / GraBd1) (Pelobacter carbinolicus).